A 660-amino-acid polypeptide reads, in one-letter code: Bifunctional polymyxin resistance protein ArnA (660 aa).

The tract at residues 1–304 is formyltransferase ArnAFT; the sequence is MKAVIFAYHD…TLGLVAGARL (304 aa). His104 (proton donor; for formyltransferase activity) is an active-site residue. (6R)-10-formyltetrahydrofolate is bound by residues Arg114 and 136 to 140; that span reads VKRAD. The interval 314-660 is dehydrogenase ArnADH; that stretch reads RRIRVLILGV…RSVDVAERAS (347 aa). NAD(+) contacts are provided by residues Asp347 and 368–369; that span reads DI. UDP-alpha-D-glucuronate is bound by residues Ala393, Tyr398, and 432-433; that span reads TS. The Proton acceptor; for decarboxylase activity role is filled by Glu434. Residues Arg460, Asn492, 526 to 535, and Tyr613 each bind UDP-alpha-D-glucuronate; that span reads KLIDGGQQKR. Residue Arg619 is the Proton donor; for decarboxylase activity of the active site.

This sequence in the N-terminal section; belongs to the Fmt family. UDP-L-Ara4N formyltransferase subfamily. In the C-terminal section; belongs to the NAD(P)-dependent epimerase/dehydratase family. UDP-glucuronic acid decarboxylase subfamily. As to quaternary structure, homohexamer, formed by a dimer of trimers.

The catalysed reaction is UDP-alpha-D-glucuronate + NAD(+) = UDP-beta-L-threo-pentopyranos-4-ulose + CO2 + NADH. It carries out the reaction UDP-4-amino-4-deoxy-beta-L-arabinose + (6R)-10-formyltetrahydrofolate = UDP-4-deoxy-4-formamido-beta-L-arabinose + (6S)-5,6,7,8-tetrahydrofolate + H(+). It participates in nucleotide-sugar biosynthesis; UDP-4-deoxy-4-formamido-beta-L-arabinose biosynthesis; UDP-4-deoxy-4-formamido-beta-L-arabinose from UDP-alpha-D-glucuronate: step 1/3. It functions in the pathway nucleotide-sugar biosynthesis; UDP-4-deoxy-4-formamido-beta-L-arabinose biosynthesis; UDP-4-deoxy-4-formamido-beta-L-arabinose from UDP-alpha-D-glucuronate: step 3/3. The protein operates within bacterial outer membrane biogenesis; lipopolysaccharide biosynthesis. Bifunctional enzyme that catalyzes the oxidative decarboxylation of UDP-glucuronic acid (UDP-GlcUA) to UDP-4-keto-arabinose (UDP-Ara4O) and the addition of a formyl group to UDP-4-amino-4-deoxy-L-arabinose (UDP-L-Ara4N) to form UDP-L-4-formamido-arabinose (UDP-L-Ara4FN). The modified arabinose is attached to lipid A and is required for resistance to polymyxin and cationic antimicrobial peptides. This is Bifunctional polymyxin resistance protein ArnA from Salmonella dublin (strain CT_02021853).